Here is a 276-residue protein sequence, read N- to C-terminus: Type 2 phosphatidylinositol 4,5-bisphosphate 4-phosphatase (276 aa).

Residues M1–S10 are compositionally biased toward basic and acidic residues. The disordered stretch occupies residues M1–Y27. Residues I13–Y27 show a composition bias toward polar residues. The active site involves C106. A CX5R motif motif is present at residues C106 to R112. Helical transmembrane passes span C211–G231 and W246–I266.

The protein localises to the late endosome membrane. It localises to the lysosome membrane. It catalyses the reaction a 1,2-diacyl-sn-glycero-3-phospho-(1D-myo-inositol-4,5-bisphosphate) + H2O = a 1,2-diacyl-sn-glycero-3-phospho-(1D-myo-inositol-5-phosphate) + phosphate. Its function is as follows. Catalyzes the hydrolysis of phosphatidylinositol-4,5-bisphosphate (PtdIns-4,5-P2) to phosphatidylinositol-4-phosphate (PtdIns-4-P). This Xenopus tropicalis (Western clawed frog) protein is Type 2 phosphatidylinositol 4,5-bisphosphate 4-phosphatase (pip4p2).